The chain runs to 34 residues: Beta/mu-theraphotoxin-Pe1a (34 aa).

3 disulfide bridges follow: C2–C16, C9–C21, and C15–C28.

The protein belongs to the neurotoxin 10 (Hwtx-1) family. 54 (ProTx-1) subfamily. Expressed by the venom gland.

It is found in the secreted. Its function is as follows. Ion channel impairing toxin that inhibits voltage-gated sodium channels. The recombinantly expressed toxin shows a weak activity against Nav1.7/SCN9A (25% inhibition at 10 uM), and shifts the voltage dependence of channel activation to more depolarized potentials. The polypeptide is Beta/mu-theraphotoxin-Pe1a (Phormingochilus everetti (Malaysian purple earth tiger tarantula)).